A 155-amino-acid polypeptide reads, in one-letter code: Small ribosomal subunit protein uS7 (155 aa).

The protein belongs to the universal ribosomal protein uS7 family. As to quaternary structure, part of the 30S ribosomal subunit. Contacts proteins S9 and S11.

Functionally, one of the primary rRNA binding proteins, it binds directly to 16S rRNA where it nucleates assembly of the head domain of the 30S subunit. Is located at the subunit interface close to the decoding center, probably blocks exit of the E-site tRNA. The protein is Small ribosomal subunit protein uS7 of Mesoplasma florum (strain ATCC 33453 / NBRC 100688 / NCTC 11704 / L1) (Acholeplasma florum).